The sequence spans 424 residues: Serine--tRNA ligase (424 aa).

Position 231 to 233 (231 to 233 (TAE)) interacts with L-serine. ATP is bound by residues 262–264 (RRE) and V278. E285 provides a ligand contact to L-serine. Residue 349-352 (EVSS) participates in ATP binding. S384 is a binding site for L-serine.

It belongs to the class-II aminoacyl-tRNA synthetase family. Type-1 seryl-tRNA synthetase subfamily. As to quaternary structure, homodimer. The tRNA molecule binds across the dimer.

The protein localises to the cytoplasm. It catalyses the reaction tRNA(Ser) + L-serine + ATP = L-seryl-tRNA(Ser) + AMP + diphosphate + H(+). The catalysed reaction is tRNA(Sec) + L-serine + ATP = L-seryl-tRNA(Sec) + AMP + diphosphate + H(+). It functions in the pathway aminoacyl-tRNA biosynthesis; selenocysteinyl-tRNA(Sec) biosynthesis; L-seryl-tRNA(Sec) from L-serine and tRNA(Sec): step 1/1. Functionally, catalyzes the attachment of serine to tRNA(Ser). Is also able to aminoacylate tRNA(Sec) with serine, to form the misacylated tRNA L-seryl-tRNA(Sec), which will be further converted into selenocysteinyl-tRNA(Sec). In Chlamydia abortus (strain DSM 27085 / S26/3) (Chlamydophila abortus), this protein is Serine--tRNA ligase.